A 485-amino-acid polypeptide reads, in one-letter code: GTPase Obg (485 aa).

Residues 2 to 159 (SKFIDRVVLH…RDLVLELKSV (158 aa)) form the Obg domain. The interval 64–84 (PHAKAGNGKPGEGGNRDGKMG) is disordered. The region spanning 160 to 340 (ADVGLVGFPS…LTFALADLVR (181 aa)) is the OBG-type G domain. Residues 166–173 (GFPSAGKS), 191–195 (FTTLV), 212–215 (DVPG), 292–295 (NKTD), and 321–323 (SAV) contribute to the GTP site. 2 residues coordinate Mg(2+): Ser173 and Thr193. An OCT domain is found at 358 to 438 (PIAVDESGFT…IGDVTFDWEP (81 aa)). Residues 457 to 469 (LEQSDRVSAAERK) are compositionally biased toward basic and acidic residues. Residues 457–485 (LEQSDRVSAAERKHASRVRRGLVEDDEQR) are disordered.

This sequence belongs to the TRAFAC class OBG-HflX-like GTPase superfamily. OBG GTPase family. In terms of assembly, monomer. The cofactor is Mg(2+).

The protein localises to the cytoplasm. In terms of biological role, an essential GTPase which binds GTP, GDP and possibly (p)ppGpp with moderate affinity, with high nucleotide exchange rates and a fairly low GTP hydrolysis rate. Plays a role in control of the cell cycle, stress response, ribosome biogenesis and in those bacteria that undergo differentiation, in morphogenesis control. The sequence is that of GTPase Obg from Nocardia farcinica (strain IFM 10152).